The primary structure comprises 468 residues: MSQDTLFDKVWDLHKVSRLPGGSDQILIGLHLIHEVTSPQAFGALKDKNLKVKFPDRTVATVDHIVPTDNQSRPFKDNLAEQMIETLEKNCLEHKIRFFNIGSGNQGIVHVVAPELGLTQPGMTIACGDSHTSTHGAFGSIAFGIGTSQVRDVLATQTIAMNKLKVRQIWCDNKLSKGVFAKDLVLHIINELGVKAGVGFAYEFAGPAIDELSMEERMTICNMSIEGGARCGYINPDEKTFSYIKDKLCAPKNEYWDKALTWWKSLKSDENSIYDDVIKLDASKVEPTVTWGITPGQSISINQQIPLLDDLSPNDKLVAKEAYEYMSFKPGQYIKDTPVDVCFIGSCTNGRISDLRVAARVLKNKKVSKNVKAFVVPGSEKVATEAKQEGLDEIFKDSGFQWREPGCSMCLAMNSDKLIGNQVSASSSNRNFKGRQGSPSGRTLLMSPAMVAAAAINGKVSDVREFIN.

Cys347, Cys407, and Cys410 together coordinate [4Fe-4S] cluster.

Belongs to the aconitase/IPM isomerase family. LeuC type 1 subfamily. In terms of assembly, heterodimer of LeuC and LeuD. The cofactor is [4Fe-4S] cluster.

It carries out the reaction (2R,3S)-3-isopropylmalate = (2S)-2-isopropylmalate. Its pathway is amino-acid biosynthesis; L-leucine biosynthesis; L-leucine from 3-methyl-2-oxobutanoate: step 2/4. Catalyzes the isomerization between 2-isopropylmalate and 3-isopropylmalate, via the formation of 2-isopropylmaleate. This chain is 3-isopropylmalate dehydratase large subunit, found in Prochlorococcus marinus (strain AS9601).